Consider the following 734-residue polypeptide: Photosystem I P700 chlorophyll a apoprotein A2 (734 aa).

8 consecutive transmembrane segments (helical) span residues 46 to 69 (IFASHFGHLAIIFLWTSGNLFHVA), 135 to 158 (LYFGALGLLVLSTTLLFAGWLHLQ), 175 to 199 (LNHHLSGLFGVSSLAWSGHLIHVAI), 273 to 291 (IAHHHLAIAVVFIFAGHMY), 330 to 353 (LHMQLGLALASLGVATSLVAQHMY), 369 to 395 (AALYTHHQYIAGFLMVGAFAHGAIFFV), 417 to 439 (AIISHLSWVSLFLGFHTLGLYIH), and 517 to 535 (FLVHHAIALGLHTTTLILV). Residues Cys-559 and Cys-568 each contribute to the [4Fe-4S] cluster site. Transmembrane regions (helical) follow at residues 575–596 (AFYLAMFWMLNTISWVTFYWHW) and 643–665 (QAVWAWMFLFGHLIWATGFMFLI). The chlorophyll a site is built by His-654, Met-662, and Tyr-670. Residue Trp-671 coordinates phylloquinone. The helical transmembrane segment at 707 to 727 (LVGLAHFTVGFIFTFAPFVIA) threads the bilayer.

This sequence belongs to the PsaA/PsaB family. In terms of assembly, the PsaA/B heterodimer binds the P700 chlorophyll special pair and subsequent electron acceptors. PSI consists of a core antenna complex that captures photons, and an electron transfer chain that converts photonic excitation into a charge separation. The eukaryotic PSI reaction center is composed of at least 11 subunits. It depends on P700 is a chlorophyll a/chlorophyll a' dimer, A0 is one or more chlorophyll a, A1 is one or both phylloquinones and FX is a shared 4Fe-4S iron-sulfur center. as a cofactor.

Its subcellular location is the plastid. The protein localises to the chloroplast thylakoid membrane. It carries out the reaction reduced [plastocyanin] + hnu + oxidized [2Fe-2S]-[ferredoxin] = oxidized [plastocyanin] + reduced [2Fe-2S]-[ferredoxin]. PsaA and PsaB bind P700, the primary electron donor of photosystem I (PSI), as well as the electron acceptors A0, A1 and FX. PSI is a plastocyanin/cytochrome c6-ferredoxin oxidoreductase, converting photonic excitation into a charge separation, which transfers an electron from the donor P700 chlorophyll pair to the spectroscopically characterized acceptors A0, A1, FX, FA and FB in turn. Oxidized P700 is reduced on the lumenal side of the thylakoid membrane by plastocyanin or cytochrome c6. This Emiliania huxleyi (Coccolithophore) protein is Photosystem I P700 chlorophyll a apoprotein A2.